We begin with the raw amino-acid sequence, 89 residues long: Small ribosomal subunit protein uS17 (89 aa).

The protein belongs to the universal ribosomal protein uS17 family. As to quaternary structure, part of the 30S ribosomal subunit.

One of the primary rRNA binding proteins, it binds specifically to the 5'-end of 16S ribosomal RNA. In Bacteroides fragilis (strain ATCC 25285 / DSM 2151 / CCUG 4856 / JCM 11019 / LMG 10263 / NCTC 9343 / Onslow / VPI 2553 / EN-2), this protein is Small ribosomal subunit protein uS17.